A 267-amino-acid polypeptide reads, in one-letter code: MTENRITALLRQDKKLLLAYYMPEFPVAGATLPVLEALQESGADIIELGIPFSDPVGDGPVIQEAAHRSIANGVSLHRLLDIVGRARRGEGCRKITVPILLMGYCNPLIAYGGDCFLTDATEAGIDGLLLPDLPPEEAGEFLERAKAFSMTVVFLISPVTPPERIEMIDGMSTDFSYCLAVNATTGTAKLSEGDTEASVDEYLKRVRRHTKKKFVVGFGIKDRERVEHMWRFADGAVVGTALLQNIASAGTPQEAARLAGEFWRTLR.

Catalysis depends on proton acceptor residues Glu47 and Asp58.

It belongs to the TrpA family. Tetramer of two alpha and two beta chains.

It carries out the reaction (1S,2R)-1-C-(indol-3-yl)glycerol 3-phosphate + L-serine = D-glyceraldehyde 3-phosphate + L-tryptophan + H2O. Its pathway is amino-acid biosynthesis; L-tryptophan biosynthesis; L-tryptophan from chorismate: step 5/5. The alpha subunit is responsible for the aldol cleavage of indoleglycerol phosphate to indole and glyceraldehyde 3-phosphate. This chain is Tryptophan synthase alpha chain, found in Chlorobium phaeovibrioides (strain DSM 265 / 1930) (Prosthecochloris vibrioformis (strain DSM 265)).